We begin with the raw amino-acid sequence, 202 residues long: Small ribosomal subunit protein uS4 (202 aa).

Positions Ser91 to Asp168 constitute an S4 RNA-binding domain.

The protein belongs to the universal ribosomal protein uS4 family. As to quaternary structure, part of the 30S ribosomal subunit. Contacts protein S5. The interaction surface between S4 and S5 is involved in control of translational fidelity.

Its function is as follows. One of the primary rRNA binding proteins, it binds directly to 16S rRNA where it nucleates assembly of the body of the 30S subunit. With S5 and S12 plays an important role in translational accuracy. The protein is Small ribosomal subunit protein uS4 of Ehrlichia chaffeensis (strain ATCC CRL-10679 / Arkansas).